A 1176-amino-acid polypeptide reads, in one-letter code: Pesticidal crystal protein Cry1Ag (1176 aa).

The protein belongs to the delta endotoxin family.

In terms of biological role, promotes colloidosmotic lysis by binding to the midgut epithelial cells of many lepidopteran larvae. This is Pesticidal crystal protein Cry1Ag (cry1Ag) from Bacillus thuringiensis.